A 268-amino-acid polypeptide reads, in one-letter code: Ribosome maturation factor RimP (268 aa).

2 disordered regions span residues 1-41 and 223-268; these read MGSA…GRGG and LVEP…EMTR. Positions 32-41 are enriched in low complexity; the sequence is PSGSARGRGG. Basic and acidic residues predominate over residues 248–257; sequence ESNDDGREAG.

It belongs to the RimP family.

The protein localises to the cytoplasm. Functionally, required for maturation of 30S ribosomal subunits. The sequence is that of Ribosome maturation factor RimP from Frankia casuarinae (strain DSM 45818 / CECT 9043 / HFP020203 / CcI3).